The sequence spans 155 residues: Endoribonuclease YbeY (155 aa).

Zn(2+) is bound by residues His-114, His-118, and His-124.

Belongs to the endoribonuclease YbeY family. The cofactor is Zn(2+).

It localises to the cytoplasm. In terms of biological role, single strand-specific metallo-endoribonuclease involved in late-stage 70S ribosome quality control and in maturation of the 3' terminus of the 16S rRNA. In Citrobacter koseri (strain ATCC BAA-895 / CDC 4225-83 / SGSC4696), this protein is Endoribonuclease YbeY.